We begin with the raw amino-acid sequence, 1650 residues long: Phosphatidylinositol 3,4,5-trisphosphate-dependent Rac exchanger 1 protein (1650 aa).

Residues Met-1 to Gly-19 are compositionally biased toward gly residues. The disordered stretch occupies residues Met-1–Ala-33. Positions Leu-44 to Thr-235 constitute a DH domain. Positions Glu-266–Glu-387 constitute a PH domain. Ser-314 carries the phosphoserine modification. DEP domains lie at Met-416 to Tyr-491 and Ser-518 to Ala-592. The PDZ domain occupies Arg-620–Ala-698. A disordered region spans residues Ala-793–Ala-813. The span at Pro-800–Pro-810 shows a compositional bias: acidic residues. Ser-991 carries the post-translational modification Phosphoserine. Disordered regions lie at residues Ser-1022 to Ser-1047 and Pro-1099 to Arg-1129. Residues Gln-1030–Ser-1047 show a composition bias toward polar residues. Positions Pro-1109 to Ser-1122 are enriched in low complexity. 2 positions are modified to phosphoserine: Ser-1186 and Ser-1191.

In terms of assembly, interacts preferentially with RAC2. Interacts with RAC1. Interacts with AUTS2.

It is found in the cytoplasm. It localises to the cytosol. Its subcellular location is the cell membrane. Functions as a RAC guanine nucleotide exchange factor (GEF), which activates the Rac proteins by exchanging bound GDP for free GTP. Its activity is synergistically activated by phosphatidylinositol 3,4,5-trisphosphate and the beta gamma subunits of heterotrimeric G protein. May function downstream of heterotrimeric G proteins in neutrophils. This Mus musculus (Mouse) protein is Phosphatidylinositol 3,4,5-trisphosphate-dependent Rac exchanger 1 protein (Prex1).